A 349-amino-acid chain; its full sequence is GATA zinc finger domain-containing protein 24 (349 aa).

Low complexity-rich tracts occupy residues 95–169 (NINR…VNKN) and 177–195 (NKSCKNNNINNNNNNNNNS). 2 disordered regions span residues 95–227 (NINR…PVIK) and 250–294 (DYDY…KPVQ). Positions 196-212 (ENKEKNNINNNNEKENN) are enriched in basic and acidic residues. Residues 257–272 (SNESSSPTLSASTLSS) show a composition bias toward low complexity. A compositionally biased stretch (basic residues) spans 278–289 (KVLKRGRGRPSK). The segment at 295 to 323 (CFSCFRSNTPEWRKGKDKDGNVIDLCNAC) adopts a GATA-type zinc-finger fold.

The polypeptide is GATA zinc finger domain-containing protein 24 (gtaX) (Dictyostelium discoideum (Social amoeba)).